The following is a 337-amino-acid chain: Probable RuBisCO transcriptional regulator (337 aa).

In terms of domain architecture, HTH lysR-type spans Phe6–Thr63. A DNA-binding region (H-T-H motif) is located at residues Phe23–Gln42.

The protein belongs to the LysR transcriptional regulatory family.

Functionally, trans-acting transcriptional regulator of RuBisCO genes (rbcL and rbcS) expression. The protein is Probable RuBisCO transcriptional regulator (rbcR) of Nostoc sp. (strain PCC 7120 / SAG 25.82 / UTEX 2576).